The primary structure comprises 417 residues: NADH-quinone oxidoreductase subunit D (417 aa).

The protein belongs to the complex I 49 kDa subunit family. As to quaternary structure, NDH-1 is composed of 14 different subunits. Subunits NuoB, C, D, E, F, and G constitute the peripheral sector of the complex.

It localises to the cell inner membrane. It carries out the reaction a quinone + NADH + 5 H(+)(in) = a quinol + NAD(+) + 4 H(+)(out). In terms of biological role, NDH-1 shuttles electrons from NADH, via FMN and iron-sulfur (Fe-S) centers, to quinones in the respiratory chain. The immediate electron acceptor for the enzyme in this species is believed to be ubiquinone. Couples the redox reaction to proton translocation (for every two electrons transferred, four hydrogen ions are translocated across the cytoplasmic membrane), and thus conserves the redox energy in a proton gradient. The sequence is that of NADH-quinone oxidoreductase subunit D from Acidovorax sp. (strain JS42).